The sequence spans 332 residues: Ribosomal RNA small subunit methyltransferase H (332 aa).

S-adenosyl-L-methionine-binding positions include 36-38 (GGY), Asp54, Phe81, Asp102, and Gln109.

The protein belongs to the methyltransferase superfamily. RsmH family.

It is found in the cytoplasm. The enzyme catalyses cytidine(1402) in 16S rRNA + S-adenosyl-L-methionine = N(4)-methylcytidine(1402) in 16S rRNA + S-adenosyl-L-homocysteine + H(+). In terms of biological role, specifically methylates the N4 position of cytidine in position 1402 (C1402) of 16S rRNA. The polypeptide is Ribosomal RNA small subunit methyltransferase H (Nitrobacter winogradskyi (strain ATCC 25391 / DSM 10237 / CIP 104748 / NCIMB 11846 / Nb-255)).